Consider the following 93-residue polypeptide: Aspartyl/glutamyl-tRNA(Asn/Gln) amidotransferase subunit C (93 aa).

Belongs to the GatC family. As to quaternary structure, heterotrimer of A, B and C subunits.

The enzyme catalyses L-glutamyl-tRNA(Gln) + L-glutamine + ATP + H2O = L-glutaminyl-tRNA(Gln) + L-glutamate + ADP + phosphate + H(+). The catalysed reaction is L-aspartyl-tRNA(Asn) + L-glutamine + ATP + H2O = L-asparaginyl-tRNA(Asn) + L-glutamate + ADP + phosphate + 2 H(+). Allows the formation of correctly charged Asn-tRNA(Asn) or Gln-tRNA(Gln) through the transamidation of misacylated Asp-tRNA(Asn) or Glu-tRNA(Gln) in organisms which lack either or both of asparaginyl-tRNA or glutaminyl-tRNA synthetases. The reaction takes place in the presence of glutamine and ATP through an activated phospho-Asp-tRNA(Asn) or phospho-Glu-tRNA(Gln). The polypeptide is Aspartyl/glutamyl-tRNA(Asn/Gln) amidotransferase subunit C (Methanococcoides burtonii (strain DSM 6242 / NBRC 107633 / OCM 468 / ACE-M)).